Consider the following 33-residue polypeptide: Photosystem II reaction center protein Psb30 (33 aa).

The chain crosses the membrane as a helical span at residues 5 to 25 (LIVQLGSLALITVAGPAIIVL).

It belongs to the Psb30/Ycf12 family. As to quaternary structure, PSII is composed of 1 copy each of membrane proteins PsbA, PsbB, PsbC, PsbD, PsbE, PsbF, PsbH, PsbI, PsbJ, PsbK, PsbL, PsbM, PsbT, PsbY, PsbZ, Psb30/Ycf12, peripheral proteins of the oxygen-evolving complex and a large number of cofactors. It forms dimeric complexes.

It localises to the plastid. The protein localises to the chloroplast thylakoid membrane. Its function is as follows. A core subunit of photosystem II (PSII), probably helps stabilize the reaction center. This chain is Photosystem II reaction center protein Psb30, found in Euglena stellata.